The sequence spans 971 residues: E3 ubiquitin-protein ligase MIB2 (971 aa).

Residues Met1–Ala80 enclose the MIB/HERC2 1 domain. The ZZ-type zinc finger occupies His86 to Ser138. The Zn(2+) site is built by Cys91, Cys94, Cys106, Cys109, Cys115, Cys118, His124, and His128. In terms of domain architecture, MIB/HERC2 2 spans Leu149–Ala227. Ser251 is subject to Phosphoserine. 9 ANK repeats span residues Gln478–Leu507, Glu511–Ala540, Thr544–Leu573, His577–Ala609, Gln613–Asp642, Asp647–Val677, Lys681–Thr710, Glu714–Pro742, and Arg783–Ala812. 2 consecutive RING-type zinc fingers follow at residues Cys848–Gln883 and Cys927–Arg960.

As to quaternary structure, interacts with actin monomer. Post-translationally, ubiquitinated. Possibly via autoubiquitination.

The protein localises to the cytoplasm. Its subcellular location is the endosome. It catalyses the reaction S-ubiquitinyl-[E2 ubiquitin-conjugating enzyme]-L-cysteine + [acceptor protein]-L-lysine = [E2 ubiquitin-conjugating enzyme]-L-cysteine + N(6)-ubiquitinyl-[acceptor protein]-L-lysine.. Its pathway is protein modification; protein ubiquitination. Functionally, E3 ubiquitin-protein ligase that mediates ubiquitination of Delta receptors, which act as ligands of Notch proteins. Positively regulates the Delta-mediated Notch signaling by ubiquitinating the intracellular domain of Delta, leading to endocytosis of Delta receptors. The sequence is that of E3 ubiquitin-protein ligase MIB2 (Mib2) from Rattus norvegicus (Rat).